The primary structure comprises 103 residues: Large ribosomal subunit protein bL21 (103 aa).

Belongs to the bacterial ribosomal protein bL21 family. In terms of assembly, part of the 50S ribosomal subunit. Contacts protein L20.

This protein binds to 23S rRNA in the presence of protein L20. This Haemophilus influenzae (strain ATCC 51907 / DSM 11121 / KW20 / Rd) protein is Large ribosomal subunit protein bL21.